The chain runs to 190 residues: Putative 3-methyladenine DNA glycosylase (190 aa).

It belongs to the DNA glycosylase MPG family.

The polypeptide is Putative 3-methyladenine DNA glycosylase (Chlamydia abortus (strain DSM 27085 / S26/3) (Chlamydophila abortus)).